The sequence spans 327 residues: Zinc transport protein ZntB (327 aa).

Topologically, residues 1 to 273 (MEAIKGSEVN…ARRTYTMSLM (273 aa)) are cytoplasmic. The chain crosses the membrane as a helical span at residues 274 to 294 (AMVFLPSTFLTGLFGVNLGGI). The Periplasmic segment spans residues 295 to 300 (PGGAWH). Residues 301–321 (FGFSMFCILLVVLIGGVTLWL) form a helical membrane-spanning segment. The Cytoplasmic segment spans residues 322-327 (HRSKWL).

The protein belongs to the CorA metal ion transporter (MIT) (TC 1.A.35) family.

The protein localises to the cell inner membrane. The enzyme catalyses Zn(2+)(out) + H(+)(out) = Zn(2+)(in) + H(+)(in). In terms of biological role, zinc transporter. Acts as a Zn(2+):proton symporter, which likely mediates zinc ion uptake. The protein is Zinc transport protein ZntB of Citrobacter koseri (strain ATCC BAA-895 / CDC 4225-83 / SGSC4696).